The following is a 413-amino-acid chain: Probable inactive allantoicase (413 aa).

This sequence belongs to the allantoicase family.

Its function is as follows. The function of this enzyme is unclear as allantoicase activity is not known to exist in mammals. The protein is Probable inactive allantoicase of Rattus norvegicus (Rat).